The sequence spans 319 residues: Ribonuclease Z (319 aa).

Zn(2+) contacts are provided by histidine 62, histidine 64, aspartate 66, histidine 67, histidine 145, aspartate 215, and histidine 273. Aspartate 66 acts as the Proton acceptor in catalysis.

Belongs to the RNase Z family. In terms of assembly, homodimer. It depends on Zn(2+) as a cofactor.

It catalyses the reaction Endonucleolytic cleavage of RNA, removing extra 3' nucleotides from tRNA precursor, generating 3' termini of tRNAs. A 3'-hydroxy group is left at the tRNA terminus and a 5'-phosphoryl group is left at the trailer molecule.. Its function is as follows. Zinc phosphodiesterase, which displays some tRNA 3'-processing endonuclease activity. Probably involved in tRNA maturation, by removing a 3'-trailer from precursor tRNA. This is Ribonuclease Z from Borrelia hermsii (strain HS1 / DAH).